A 433-amino-acid polypeptide reads, in one-letter code: Indole diterpene prenyltransferase terF (433 aa).

The protein belongs to the tryptophan dimethylallyltransferase family.

The protein operates within secondary metabolite biosynthesis. Its function is as follows. Indole diterpene prenyltransferase; part of the gene cluster that mediates the biosynthesis of terpendoles, indole-diterpene (IDT) mycotoxins including terpendole I, terpendole K, terpendole C, as well as the kinesin Eg5 inhibitor terpendole E. Terpendoles biosynthesis begins with the synthesis of geranylgeranyl diphosphate (GGPP) by a yet unidentified GGPP synthase. Condensation of indole-3-glycerol phosphate with GGPP by the prenyltransferase terC then forms 3-geranylgeranylindole (3-GGI), followed by epoxidation and cyclization of this intermediate (by the FAD-dependent monooxygeanse terM and the terpene cyclase terB) to form paspaline. The cytochrome monooxygenase terQ then hydroxylates paspalline at C-11 to yield terpendole E. The cytochrome monooxygenase terP converts terpendole E to 13-desoxyterpendole I, and terQ converts 13-desoxyterpendole I into terpendole I. TerF and terK are required for conversion of terpendole I to terpendole C which is further converted to terpendole K. The chain is Indole diterpene prenyltransferase terF from Tolypocladium album (Soil fungus).